We begin with the raw amino-acid sequence, 469 residues long: 3-isopropylmalate dehydratase large subunit (469 aa).

[4Fe-4S] cluster-binding residues include Cys-347, Cys-407, and Cys-410.

This sequence belongs to the aconitase/IPM isomerase family. LeuC type 1 subfamily. Heterodimer of LeuC and LeuD. [4Fe-4S] cluster serves as cofactor.

The enzyme catalyses (2R,3S)-3-isopropylmalate = (2S)-2-isopropylmalate. It participates in amino-acid biosynthesis; L-leucine biosynthesis; L-leucine from 3-methyl-2-oxobutanoate: step 2/4. Functionally, catalyzes the isomerization between 2-isopropylmalate and 3-isopropylmalate, via the formation of 2-isopropylmaleate. This Prochlorococcus marinus (strain NATL2A) protein is 3-isopropylmalate dehydratase large subunit.